The primary structure comprises 160 residues: Transcription antitermination protein NusB (160 aa).

The protein belongs to the NusB family.

Involved in transcription antitermination. Required for transcription of ribosomal RNA (rRNA) genes. Binds specifically to the boxA antiterminator sequence of the ribosomal RNA (rrn) operons. This is Transcription antitermination protein NusB from Mycolicibacterium smegmatis (strain ATCC 700084 / mc(2)155) (Mycobacterium smegmatis).